Reading from the N-terminus, the 534-residue chain is Membrane-bound lytic murein transglycosylase F (534 aa).

An N-terminal signal peptide occupies residues 1 to 24; the sequence is MQISQFNRLKRSALLFASVLLLSA. The tract at residues 25–285 is non-LT domain; it reads CQIESEPKSE…TLEEKYIGHI (261 aa). An LT domain region spans residues 287 to 534; that stretch reads AFDYVDTRAF…AEQTPVPKAE (248 aa). Residue glutamate 330 is part of the active site. The disordered stretch occupies residues 507 to 534; sequence VSGAVEVTPPPEENAPQEAEQTPVPKAE. Positions 520-534 are enriched in low complexity; that stretch reads NAPQEAEQTPVPKAE.

In the N-terminal section; belongs to the bacterial solute-binding protein 3 family. The protein in the C-terminal section; belongs to the transglycosylase Slt family.

Its subcellular location is the cell outer membrane. It catalyses the reaction Exolytic cleavage of the (1-&gt;4)-beta-glycosidic linkage between N-acetylmuramic acid (MurNAc) and N-acetylglucosamine (GlcNAc) residues in peptidoglycan, from either the reducing or the non-reducing ends of the peptidoglycan chains, with concomitant formation of a 1,6-anhydrobond in the MurNAc residue.. Its function is as follows. Murein-degrading enzyme that degrades murein glycan strands and insoluble, high-molecular weight murein sacculi, with the concomitant formation of a 1,6-anhydromuramoyl product. Lytic transglycosylases (LTs) play an integral role in the metabolism of the peptidoglycan (PG) sacculus. Their lytic action creates space within the PG sacculus to allow for its expansion as well as for the insertion of various structures such as secretion systems and flagella. The polypeptide is Membrane-bound lytic murein transglycosylase F (Vibrio campbellii (strain ATCC BAA-1116)).